The sequence spans 551 residues: Bestrophin-1 (551 aa).

The Cytoplasmic segment spans residues 1 to 31 (MTITYTNKVANARLGSFSSLLLCWRGSIYKL). Residue A10 coordinates Ca(2+). A helical membrane pass occupies residues 32–51 (LYGEFLVFIFLYYSIRGLYR). Topologically, residues 52-60 (MVLSSDQQL) are extracellular. A helical transmembrane segment spans residues 61–82 (LFEKLALYCDSYIQLIPISFVL). At 83–237 (GFYVTLVVSR…DWISIPLVYT (155 aa)) the chain is on the cytoplasmic side. Residues 238-255 (QVVTVAVYSFFLACLIGR) traverse the membrane as a helical segment. At 256 to 274 (QFLNPNKDYPGHEMDLVVP) the chain is on the extracellular side. Residues 275 to 288 (VFTILQFLFYMGWL) form a helical membrane-spanning segment. The Cytoplasmic portion of the chain corresponds to 289 to 551 (KVAEQLINPF…EAGTKPVLYE (263 aa)). The Ca(2+) site is built by Q293, N296, D301, and D304. The segment at 346-379 (PYTAASARSRRHSFMGSTFNISLKKEDLELWSKE) is auto-inhibitory segment. The segment at 459–489 (SHCGPQAPSSHPTEQSAPSSSDTGDGPSTDY) is disordered. Over residues 465–475 (APSSHPTEQSA) the composition is skewed to polar residues. Positions 476–488 (PSSSDTGDGPSTD) are enriched in low complexity.

Belongs to the anion channel-forming bestrophin (TC 1.A.46) family. Calcium-sensitive chloride channel subfamily. In terms of assembly, interacts with YWHAG; this interaction promotes the ligand-gated L-glutamate channel activity leading to the positive regulation of NMDA glutamate receptor activity through the L-glutamate secretion.

The protein localises to the cell membrane. It is found in the basolateral cell membrane. It carries out the reaction 4-aminobutanoate(in) = 4-aminobutanoate(out). The catalysed reaction is L-glutamate(out) = L-glutamate(in). It catalyses the reaction chloride(in) = chloride(out). The enzyme catalyses hydrogencarbonate(in) = hydrogencarbonate(out). It carries out the reaction D-serine(in) = D-serine(out). Inactivated by sulfhydryl-reactive agents. In terms of biological role, ligand-gated anion channel that allows the movement of anions across cell membranes when activated by calcium (Ca2+). Allows the movement of chloride and hydrogencarbonate. Found in a partially open conformation leading to significantly smaller chloride movement. Upon F2R/PAR-1 activation, the sequestered calcium is released into the cytosol of astrocytes, leading to the (Ca2+)-dependent release of L-glutamate into the synaptic cleft that targets the neuronal postsynaptic GRIN2A/NMDAR receptor resulting in the synaptic plasticity regulation. Upon activation of the norepinephrine-alpha-1 adrenergic receptor signaling pathway, transports as well D-serine than L-glutamate in a (Ca2+)-dependent manner, leading to activation of adjacent NMDAR receptors and therefore regulates the heterosynaptic long-term depression and metaplasticity during initial memory acquisition. Releases the 4-aminobutanoate neurotransmitter in a (Ca2+)-dependent manner, and participates in its tonic release from cerebellar glial cells. This Mus musculus (Mouse) protein is Bestrophin-1.